The primary structure comprises 411 residues: Arginine deiminase (411 aa).

Residue Cys401 is the Amidino-cysteine intermediate of the active site.

It belongs to the arginine deiminase family.

The protein resides in the cytoplasm. It carries out the reaction L-arginine + H2O = L-citrulline + NH4(+). It functions in the pathway amino-acid degradation; L-arginine degradation via ADI pathway; carbamoyl phosphate from L-arginine: step 1/2. This chain is Arginine deiminase, found in Streptococcus equi subsp. zooepidemicus (strain H70).